A 281-amino-acid chain; its full sequence is Protein synthesis inhibitor I (281 aa).

Ala2 is subject to N-acetylalanine. Residue Glu175 is part of the active site.

It belongs to the ribosome-inactivating protein family. Type 1 RIP subfamily.

Its subcellular location is the cytoplasm. The catalysed reaction is Endohydrolysis of the N-glycosidic bond at one specific adenosine on the 28S rRNA.. Its function is as follows. Inhibits the elongation phase of protein synthesis. It inactivates fungal ribosomes even more effectively than mammalian ribosomes and is thought to function as a constitutive antifungal agent in plants. This chain is Protein synthesis inhibitor I (RIP30), found in Hordeum vulgare (Barley).